The sequence spans 391 residues: 3-ketoacyl-CoA thiolase (391 aa).

Catalysis depends on Cys95, which acts as the Acyl-thioester intermediate. Active-site proton acceptor residues include His347 and Cys377.

This sequence belongs to the thiolase-like superfamily. Thiolase family. In terms of assembly, heterotetramer of two alpha chains (FadB) and two beta chains (FadA).

The protein localises to the cytoplasm. It carries out the reaction an acyl-CoA + acetyl-CoA = a 3-oxoacyl-CoA + CoA. The protein operates within lipid metabolism; fatty acid beta-oxidation. Its function is as follows. Catalyzes the final step of fatty acid oxidation in which acetyl-CoA is released and the CoA ester of a fatty acid two carbons shorter is formed. This chain is 3-ketoacyl-CoA thiolase, found in Vibrio parahaemolyticus serotype O3:K6 (strain RIMD 2210633).